The sequence spans 109 residues: Large ribosomal subunit protein uL22 (109 aa).

Belongs to the universal ribosomal protein uL22 family. Part of the 50S ribosomal subunit.

Functionally, this protein binds specifically to 23S rRNA; its binding is stimulated by other ribosomal proteins, e.g. L4, L17, and L20. It is important during the early stages of 50S assembly. It makes multiple contacts with different domains of the 23S rRNA in the assembled 50S subunit and ribosome. The globular domain of the protein is located near the polypeptide exit tunnel on the outside of the subunit, while an extended beta-hairpin is found that lines the wall of the exit tunnel in the center of the 70S ribosome. The sequence is that of Large ribosomal subunit protein uL22 from Cupriavidus metallidurans (strain ATCC 43123 / DSM 2839 / NBRC 102507 / CH34) (Ralstonia metallidurans).